A 253-amino-acid chain; its full sequence is Imidazole glycerol phosphate synthase subunit HisF (253 aa).

Residues Asp-12 and Asp-131 contribute to the active site.

Belongs to the HisA/HisF family. Heterodimer of HisH and HisF.

It is found in the cytoplasm. It catalyses the reaction 5-[(5-phospho-1-deoxy-D-ribulos-1-ylimino)methylamino]-1-(5-phospho-beta-D-ribosyl)imidazole-4-carboxamide + L-glutamine = D-erythro-1-(imidazol-4-yl)glycerol 3-phosphate + 5-amino-1-(5-phospho-beta-D-ribosyl)imidazole-4-carboxamide + L-glutamate + H(+). Its pathway is amino-acid biosynthesis; L-histidine biosynthesis; L-histidine from 5-phospho-alpha-D-ribose 1-diphosphate: step 5/9. Its function is as follows. IGPS catalyzes the conversion of PRFAR and glutamine to IGP, AICAR and glutamate. The HisF subunit catalyzes the cyclization activity that produces IGP and AICAR from PRFAR using the ammonia provided by the HisH subunit. This chain is Imidazole glycerol phosphate synthase subunit HisF, found in Corynebacterium urealyticum (strain ATCC 43042 / DSM 7109).